A 558-amino-acid chain; its full sequence is MNTKTYGVTEPISTNGPTPKENILNDALIQELKNRGSFESEQATKKRVEVLTLFQRLVQEFVYTVSKSKNMSDSMAQDAGGKVFTFGSYRLGVYGPGSDIDTLVVVPKHVTRDDFFSVFADIIRKRPELEEIACVPDAYVPIIKLEFDGISIDLIMARLNIPRVPLDLTLDDKNLLKNLDEKDLRSLNGTRVTDEILQLVPKPTVFKHALRCIKLWAQQRAVYGNIFGFPGGVAWAMLVARICQLYPNAVSSAIVEKFFNIYTKWNWPEPVLLKSIEDGPLQVRVWNPRLYPHDRLHRMPVITPAYPSMCATHNITSSTQKVILAELSRGSSIMQEIHAGKKTWSDLFEKHSFFYKYKFYLCVVAASIDSAEEHKKWSGFIESKLRQLVLKLEVAEGVEIAHPYVKDFSNTFILDDKNAEDIINSYGTLSGEDFLRTLHSSDSDKDDEEFKKIRLTKYYIGLDLNLTKSSDGVRKLDIQYPCAEFYSICKGSTSFTEGVNFIQIKNVKLHELSNDVYEDGEERPKKSGKKRKKVIKEDGQKRVRNESPASSASVNGSS.

The segment covering 1–17 (MNTKTYGVTEPISTNGP) has biased composition (polar residues). Positions 1-20 (MNTKTYGVTEPISTNGPTPK) are disordered. Residues 86–88 (FGS), 99–101 (DID), aspartate 153, lysine 214, tyrosine 223, and 232–233 (GV) each bind ATP. 3 residues coordinate Mg(2+): aspartate 99, aspartate 101, and aspartate 153. Residues 516-558 (VYEDGEERPKKSGKKRKKVIKEDGQKRVRNESPASSASVNGSS) are disordered. The segment covering 535 to 545 (IKEDGQKRVRN) has biased composition (basic and acidic residues). Over residues 547–558 (SPASSASVNGSS) the composition is skewed to low complexity.

Belongs to the poly(A) polymerase family. Mg(2+) is required as a cofactor. Requires Mn(2+) as cofactor.

It localises to the nucleus. It carries out the reaction RNA(n) + ATP = RNA(n)-3'-adenine ribonucleotide + diphosphate. In terms of biological role, polymerase that creates the 3'-poly(A) tail of mRNA's. May acquire specificity through interaction with a cleavage and polyadenylation factor. In Candida albicans (strain SC5314 / ATCC MYA-2876) (Yeast), this protein is Poly(A) polymerase PAPalpha (PAPALPHA).